We begin with the raw amino-acid sequence, 1220 residues long: Plasma membrane calcium-transporting ATPase 1 (1220 aa).

Gly2 is subject to N-acetylglycine. Residues 2–105 (GDMANNSVAY…KTFLQLVWEA (104 aa)) lie on the Cytoplasmic side of the membrane. Residues Ser8 and Ser17 each carry the phosphoserine modification. A helical transmembrane segment spans residues 106-126 (LQDVTLIILEIAAIVSLGLSF). The Extracellular portion of the chain corresponds to 127–154 (YQPPEGDNALCGEVSVGEEEGEGETGWI). A helical transmembrane segment spans residues 155 to 175 (EGAAILLSVVCVVLVTAFNDW). The Cytoplasmic segment spans residues 176 to 366 (SKEKQFRGLQ…KEKSVLQGKL (191 aa)). The disordered stretch occupies residues 297–356 (EEEKKDEKKKEKKNKKQDGAIENRNKAKAQDGAAMEMQPLKSEEGGDGDEKDKKKANLPK). Composition is skewed to basic and acidic residues over residues 312–325 (KQDG…KAKA) and 337–356 (KSEE…NLPK). Position 338 is a phosphoserine (Ser338). Residues 367-386 (TKLAVQIGKAGLLMSAITVI) form a helical membrane-spanning segment. Residues 387-418 (ILVLYFVIDTFWVQKRPWLAECTPIYIQYFVK) lie on the Extracellular side of the membrane. A helical membrane pass occupies residues 419-439 (FFIIGVTVLVVAVPEGLPLAV). At 440–855 (TISLAYSVKK…RNVYDSISKF (416 aa)) the chain is on the cytoplasmic side. The active-site 4-aspartylphosphate intermediate is Asp475. Mg(2+)-binding residues include Asp475, Thr477, and Asp797. Residues 856 to 876 (LQFQLTVNVVAVIVAFTGACI) form a helical membrane-spanning segment. The Extracellular segment spans residues 877–882 (TQDSPL). The chain crosses the membrane as a helical span at residues 883–903 (KAVQMLWVNLIMDTLASLALA). The Cytoplasmic portion of the chain corresponds to 904-927 (TEPPTESLLLRKPYGRNKPLISRT). The chain crosses the membrane as a helical span at residues 928 to 948 (MMKNILGHAFYQLVVVFTLLF). Residues 949–971 (AGEKFFDIDSGRNAPLHAPPSEH) lie on the Extracellular side of the membrane. A helical membrane pass occupies residues 972–991 (YTIVFNTFVLMQLFNEINAR). The Cytoplasmic portion of the chain corresponds to 992–1005 (KIHGERNVFEGIFN). A helical transmembrane segment spans residues 1006–1027 (NAIFCTIVLGTFVVQIIIVQFG). The Extracellular segment spans residues 1028-1039 (GKPFSCSELSIE). The chain crosses the membrane as a helical span at residues 1040–1060 (QWLWSIFLGMGTLLWGQLIST). Residues 1061–1220 (IPTSRLKFLK…SPLHSLETSL (160 aa)) lie on the Cytoplasmic side of the membrane. Positions 1100 to 1117 (LRRGQILWFRGLNRIQTQ) are calmodulin-binding subdomain A. At Thr1116 the chain carries Phosphothreonine; by PKC. Residues 1118–1220 (IRVVNAFRSS…SPLHSLETSL (103 aa)) are required for basolateral membrane targeting. Phosphoserine occurs at positions 1140 and 1155. The disordered stretch occupies residues 1160–1220 (PLIDDTDAED…SPLHSLETSL (61 aa)). Position 1165 is a phosphothreonine (Thr1165). Ser1178 carries the phosphoserine; by PKA modification. Ser1182 carries the post-translational modification Phosphoserine. The segment covering 1200–1220 (MNKSATSSSPGSPLHSLETSL) has biased composition (polar residues).

The protein belongs to the cation transport ATPase (P-type) (TC 3.A.3) family. Type IIB subfamily. As to quaternary structure, monomer. Dimer. Oligomer. Calmodulin binding. Interacts with PDZD11. Interacts with SLC35G1 and STIM1; inhibits calcium-transporting ATPase activity after store depletion. Interacts with YWHAE; interacts with the monomeric and dimeric forms of the YWHAE but prefer the monomer form; this interaction inhibits calcium-transporting ATPase activity. Interacts with NPTN; this interaction stabilizes ATP2B1 and increases ATPase activity; this interaction controls T cell calcium homeostasis following T cell activation. Interacts with EPB41; regulates small intestinal calcium absorption through regulation of membrane expression of ATP2B1. As to expression, isoform B: Ubiquitously expressed. Isoform C: Found in brain cortex, skeletal muscle and heart muscle. Isoform D: Has only been found in fetal skeletal muscle. Isoform K: Found in small intestine and liver. Abundantly expressed in the endometrial epithelial cells and glandular epithelial cells in early-proliferative phase and early-secretory phases.

The protein resides in the cell membrane. Its subcellular location is the basolateral cell membrane. It localises to the synapse. The protein localises to the presynaptic cell membrane. It is found in the cytoplasmic vesicle. The protein resides in the secretory vesicle. Its subcellular location is the synaptic vesicle membrane. It carries out the reaction Ca(2+)(in) + ATP + H2O = Ca(2+)(out) + ADP + phosphate + H(+). Catalyzes the hydrolysis of ATP coupled with the transport of calcium from the cytoplasm to the extracellular space thereby maintaining intracellular calcium homeostasis. Plays a role in blood pressure regulation through regulation of intracellular calcium concentration and nitric oxide production leading to regulation of vascular smooth muscle cells vasoconstriction. Positively regulates bone mineralization through absorption of calcium from the intestine. Plays dual roles in osteoclast differentiation and survival by regulating RANKL-induced calcium oscillations in preosteoclasts and mediating calcium extrusion in mature osteoclasts. Regulates insulin sensitivity through calcium/calmodulin signaling pathway by regulating AKT1 activation and NOS3 activation in endothelial cells. May play a role in synaptic transmission by modulating calcium and proton dynamics at the synaptic vesicles. The sequence is that of Plasma membrane calcium-transporting ATPase 1 from Homo sapiens (Human).